A 182-amino-acid polypeptide reads, in one-letter code: MFDIGFSELLLVFVIGLIVLGPQRLPVAVKTVAGWIRALRSLATTVQNELTQELKLQEFQDSLKKVEKASLENLTPELKASMDELRQAAESMKRTYSANDPEQASDEAHTIHNPVVKGNETQHEGVTPAAAETQASAPEQKPEPVKANVPESTETASVAAIDAEKKSAAPVVESSPSSSDKP.

A helical membrane pass occupies residues 1-21 (MFDIGFSELLLVFVIGLIVLG). Disordered regions lie at residues 88–107 (AAES…ASDE) and 121–182 (TQHE…SDKP). The segment covering 168–182 (AAPVVESSPSSSDKP) has biased composition (low complexity).

Belongs to the TatB family. The Tat system comprises two distinct complexes: a TatABC complex, containing multiple copies of TatA, TatB and TatC subunits, and a separate TatA complex, containing only TatA subunits. Substrates initially bind to the TatABC complex, which probably triggers association of the separate TatA complex to form the active translocon.

Its subcellular location is the cell inner membrane. In terms of biological role, part of the twin-arginine translocation (Tat) system that transports large folded proteins containing a characteristic twin-arginine motif in their signal peptide across membranes. Together with TatC, TatB is part of a receptor directly interacting with Tat signal peptides. TatB may form an oligomeric binding site that transiently accommodates folded Tat precursor proteins before their translocation. This is Sec-independent protein translocase protein TatB from Salmonella typhi.